The chain runs to 67 residues: Large ribosomal subunit protein bL35 (67 aa).

The tract at residues 1-20 (MPKLKTKSGAKKRFVPKKSG) is disordered.

The protein belongs to the bacterial ribosomal protein bL35 family.

The chain is Large ribosomal subunit protein bL35 from Anaeromyxobacter dehalogenans (strain 2CP-1 / ATCC BAA-258).